We begin with the raw amino-acid sequence, 421 residues long: 4-hydroxy-3-methylbut-2-en-1-yl diphosphate synthase (flavodoxin) (421 aa).

Residues C311, C314, C357, and E364 each contribute to the [4Fe-4S] cluster site.

It belongs to the IspG family. Requires [4Fe-4S] cluster as cofactor.

It carries out the reaction (2E)-4-hydroxy-3-methylbut-2-enyl diphosphate + oxidized [flavodoxin] + H2O + 2 H(+) = 2-C-methyl-D-erythritol 2,4-cyclic diphosphate + reduced [flavodoxin]. It participates in isoprenoid biosynthesis; isopentenyl diphosphate biosynthesis via DXP pathway; isopentenyl diphosphate from 1-deoxy-D-xylulose 5-phosphate: step 5/6. Functionally, converts 2C-methyl-D-erythritol 2,4-cyclodiphosphate (ME-2,4cPP) into 1-hydroxy-2-methyl-2-(E)-butenyl 4-diphosphate. The protein is 4-hydroxy-3-methylbut-2-en-1-yl diphosphate synthase (flavodoxin) of Xanthomonas euvesicatoria pv. vesicatoria (strain 85-10) (Xanthomonas campestris pv. vesicatoria).